Consider the following 130-residue polypeptide: UPF0146 protein AF_0739.1 (130 aa).

The protein belongs to the UPF0146 family.

This Archaeoglobus fulgidus (strain ATCC 49558 / DSM 4304 / JCM 9628 / NBRC 100126 / VC-16) protein is UPF0146 protein AF_0739.1.